Reading from the N-terminus, the 426-residue chain is Histidine--tRNA ligase (426 aa).

It belongs to the class-II aminoacyl-tRNA synthetase family. In terms of assembly, homodimer.

The protein localises to the cytoplasm. The enzyme catalyses tRNA(His) + L-histidine + ATP = L-histidyl-tRNA(His) + AMP + diphosphate + H(+). The chain is Histidine--tRNA ligase from Streptococcus equi subsp. equi (strain 4047).